Here is a 425-residue protein sequence, read N- to C-terminus: Elongation factor 1-alpha (425 aa).

The tr-type G domain occupies 5–221 (KPHMNLAVIG…NALSEPEKPT (217 aa)). A G1 region spans residues 14-21 (GHIDHGKS). 14-21 (GHIDHGKS) contacts GTP. Residue S21 coordinates Mg(2+). Residues 70–74 (GITID) are G2. Residues 91–94 (DCPG) are G3. Residues 91–95 (DCPGH) and 146–149 (NKMD) contribute to the GTP site. The interval 146–149 (NKMD) is G4. The G5 stretch occupies residues 185-187 (SAF).

The protein belongs to the TRAFAC class translation factor GTPase superfamily. Classic translation factor GTPase family. EF-Tu/EF-1A subfamily.

The protein localises to the cytoplasm. The catalysed reaction is GTP + H2O = GDP + phosphate + H(+). In terms of biological role, GTP hydrolase that promotes the GTP-dependent binding of aminoacyl-tRNA to the A-site of ribosomes during protein biosynthesis. This Methanoculleus marisnigri (strain ATCC 35101 / DSM 1498 / JR1) protein is Elongation factor 1-alpha.